The primary structure comprises 468 residues: A-type ATP synthase subunit B (468 aa).

It belongs to the ATPase alpha/beta chains family. Has multiple subunits with at least A(3), B(3), C, D, E, F, H, I and proteolipid K(x).

It is found in the cell membrane. Functionally, component of the A-type ATP synthase that produces ATP from ADP in the presence of a proton gradient across the membrane. The B chain is a regulatory subunit. The chain is A-type ATP synthase subunit B from Haloferax volcanii (strain ATCC 29605 / DSM 3757 / JCM 8879 / NBRC 14742 / NCIMB 2012 / VKM B-1768 / DS2) (Halobacterium volcanii).